The sequence spans 773 residues: 4'-phosphopantetheine phosphatase (773 aa).

At A2 the chain carries N-acetylalanine. A pantothenate kinase region spans residues 2-402 (AECGASGSGS…SPELGPAQRA (401 aa)). 2 residues coordinate acetyl-CoA: S196 and S199. Y320 is subject to 3'-nitrotyrosine. S393 and S404 each carry phosphoserine. The 4'-phosphopantetheine phosphatase stretch occupies residues 403–773 (RSGTFDLLEM…VIFKYEVPAE (371 aa)). A Phosphothreonine modification is found at T406. The Mn(2+) site is built by D623, N624, and D659. The short motif at 724–728 (EGMGR) is the Subfamily II EGMGR motif element.

In the N-terminal section; belongs to the type II pantothenate kinase family. The protein in the C-terminal section; belongs to the damage-control phosphatase family. Phosphopantetheine phosphatase II subfamily. As to quaternary structure, homodimer. Interacts with PKM. The cofactor is Mn(2+). Ni(2+) serves as cofactor. As to expression, widely expressed with high expression in the muscle. Expressed in the retina and lens epithelium, mainly in ganglion cell layer, outer plexiform layer and retinal pigment layer (at protein level).

It is found in the cytoplasm. The enzyme catalyses (R)-4'-phosphopantetheine + H2O = (R)-pantetheine + phosphate. The catalysed reaction is (R)-4'-phosphopantetheine sulfonate + H2O = (R)-pantetheine sulfonate + phosphate. It carries out the reaction (R)-4'-phospho-S-sulfopantetheine + H2O = (R)-S-sulfopantetheine + phosphate. Activity is strongly promoted by Co(2+), Ni(2+), Mg(2+) and Mn(2+). Activity is inhibited by EDTA. Its function is as follows. Phosphatase which shows a preference for 4'-phosphopantetheine and its oxidatively damaged forms (sulfonate or S-sulfonate), providing strong indirect evidence that the phosphatase activity pre-empts damage in the coenzyme A (CoA) pathway. Hydrolyzing excess 4'-phosphopantetheine could constitute a directed overflow mechanism to prevent its oxidation to the S-sulfonate, sulfonate, or other forms. Hydrolyzing 4'-phosphopantetheine sulfonate or S-sulfonate would forestall their conversion to inactive forms of CoA and acyl carrier protein. May play a role in the physiological regulation of CoA intracellular levels. The polypeptide is 4'-phosphopantetheine phosphatase (Homo sapiens (Human)).